The following is a 216-amino-acid chain: Probable GTP-binding protein EngB (216 aa).

The EngB-type G domain occupies 21–192 (DAPQIALAGR…WRELRALAAG (172 aa)). GTP contacts are provided by residues 29-36 (GRSNVGKS), 56-60 (GKTRS), 75-78 (DLPG), 142-145 (TKGD), and 170-173 (VTAS). Positions 36 and 58 each coordinate Mg(2+). Positions 195–216 (SADDEAEDAPSDTIDAIDDVTA) are disordered. Acidic residues predominate over residues 196-216 (ADDEAEDAPSDTIDAIDDVTA).

The protein belongs to the TRAFAC class TrmE-Era-EngA-EngB-Septin-like GTPase superfamily. EngB GTPase family. Mg(2+) is required as a cofactor.

Functionally, necessary for normal cell division and for the maintenance of normal septation. This is Probable GTP-binding protein EngB from Nitratidesulfovibrio vulgaris (strain DP4) (Desulfovibrio vulgaris).